A 675-amino-acid polypeptide reads, in one-letter code: Neurexin-3b-beta (675 aa).

Residues 1–30 form the signal peptide; that stretch reads MRPHFKTRYPQWLSCMLPLVTGCVFGAVWG. The Extracellular segment spans residues 31–599; sequence SNLDSTVVLS…EVIRESSSTT (569 aa). The region spanning 81–281 is the Laminin G-like domain; sequence ATYIFGKGGG…HANIKINGSV (201 aa). Disordered stretches follow at residues 313–337 and 490–534; these read TTLS…DIVS and FKPK…MNNR. Polar residues predominate over residues 325 to 335; the sequence is SPPTIQTTDDI. Residues 600–620 traverse the membrane as a helical segment; the sequence is GMVVGIVSAAALCILILLYAM. At 621–675 the chain is on the cytoplasmic side; that stretch reads YKYRNRDEGSYQVDETRNYISNSAQNNGTVVKDKQPSTKGASNKRPKDKDKEYYV. A disordered region spans residues 642–675; it reads NSAQNNGTVVKDKQPSTKGASNKRPKDKDKEYYV. A compositionally biased stretch (basic and acidic residues) spans 665 to 675; that stretch reads RPKDKDKEYYV.

It belongs to the neurexin family. Post-translationally, processed by alpha-secretase leading to the formation of an extracellular soluble protein as well as a C-terminal membrane-embedded fragment (CTF). Proteolysis of these CTFs by gamma-secretase releases intracellular domains (ICDs) and extracellular peptides.

The protein localises to the membrane. Its function is as follows. Neuronal cell surface protein that may be involved in cell recognition and cell adhesion. The polypeptide is Neurexin-3b-beta (nrxn3b) (Danio rerio (Zebrafish)).